Here is a 204-residue protein sequence, read N- to C-terminus: Putative 3-methyladenine DNA glycosylase (204 aa).

It belongs to the DNA glycosylase MPG family.

This is Putative 3-methyladenine DNA glycosylase from Bacillus cytotoxicus (strain DSM 22905 / CIP 110041 / 391-98 / NVH 391-98).